We begin with the raw amino-acid sequence, 424 residues long: 3-ketoacyl-CoA thiolase B, peroxisomal (424 aa).

A peroxisome-targeting transit peptide spans 1 to 26 (MHRLQVVLGHLAGRPESSSALQAAPC). Positions 1 to 26 (MHRLQVVLGHLAGRPESSSALQAAPC) are PTS2-type peroxisomal targeting signal. The Acyl-thioester intermediate role is filled by cysteine 123. An N6-acetyllysine mark is found at lysine 173 and lysine 234. Positions 249, 252, and 276 each coordinate CoA. Cysteine 408 (proton donor/acceptor) is an active-site residue.

This sequence belongs to the thiolase-like superfamily. Thiolase family. Homodimer. Interacts (via PTS2-type peroxisomal targeting signal region) with PEX7; leading to its translocation into peroxisomes. As to expression, mainly expressed in liver; weaker levels in kidney, intestine and white adipose tissue.

The protein localises to the peroxisome. The enzyme catalyses an acyl-CoA + acetyl-CoA = a 3-oxoacyl-CoA + CoA. It catalyses the reaction 2 acetyl-CoA = acetoacetyl-CoA + CoA. It carries out the reaction hexanoyl-CoA + acetyl-CoA = 3-oxooctanoyl-CoA + CoA. The catalysed reaction is tetradecanoyl-CoA + acetyl-CoA = 3-oxohexadecanoyl-CoA + CoA. The enzyme catalyses 3-oxohexadecanedioyl-CoA + CoA = tetradecanedioyl-CoA + acetyl-CoA. It catalyses the reaction 3-oxo-(6Z,9Z,12Z,15Z,18Z,21Z)-tetracosahexaenoyl-CoA + CoA = (4Z,7Z,10Z,13Z,16Z,19Z)-docosahexaenoyl-CoA + acetyl-CoA. Its pathway is lipid metabolism; peroxisomal fatty acid beta-oxidation. In terms of biological role, responsible for the thiolytic cleavage of straight chain 3-keto fatty acyl-CoAs (3-oxoacyl-CoAs). Plays an important role in fatty acid peroxisomal beta-oxidation. Catalyzes the cleavage of short, medium, long, and very long straight chain 3-oxoacyl-CoAs. This Mus musculus (Mouse) protein is 3-ketoacyl-CoA thiolase B, peroxisomal.